The sequence spans 243 residues: DNA repair protein RecO (243 aa).

It belongs to the RecO family.

Functionally, involved in DNA repair and RecF pathway recombination. The protein is DNA repair protein RecO of Xylella fastidiosa (strain M12).